A 443-amino-acid polypeptide reads, in one-letter code: Tol-Pal system protein TolB (443 aa).

The signal sequence occupies residues 1 to 33 (MKIGIINTKIRTVFSAFACMIAASLVCTMPARA).

Belongs to the TolB family. The Tol-Pal system is composed of five core proteins: the inner membrane proteins TolA, TolQ and TolR, the periplasmic protein TolB and the outer membrane protein Pal. They form a network linking the inner and outer membranes and the peptidoglycan layer.

The protein resides in the periplasm. In terms of biological role, part of the Tol-Pal system, which plays a role in outer membrane invagination during cell division and is important for maintaining outer membrane integrity. This is Tol-Pal system protein TolB from Brucella suis (strain ATCC 23445 / NCTC 10510).